An 84-amino-acid polypeptide reads, in one-letter code: Omega-theraphotoxin-Pm1a (84 aa).

The first 21 residues, 1–21 (MKTSMLAVFVALPLAFVLTAA), serve as a signal peptide directing secretion. Positions 22–45 (TEERAHPNELVNSLVELVKLDAER) are excised as a propeptide. Disulfide bonds link C52-C66, C59-C71, and C65-C78.

Belongs to the neurotoxin 10 (Hwtx-1) family. 41 (Jztx-36) subfamily. Expressed by the venom gland.

Its subcellular location is the secreted. Functionally, omega-conotoxins act at presynaptic membranes, they bind and block voltage-gated calcium channels (Cav). This toxin inhibits barium currents (IBa) mediated by L-type voltage-gated calcium channels Cav1.2/CACNA1C (IC(50)=825 nM) and Cav1.3/CACNA1C (IC(50)=2240 nM). The sequence is that of Omega-theraphotoxin-Pm1a from Pelinobius muticus (King baboon spider).